Here is a 611-residue protein sequence, read N- to C-terminus: Aspartate--tRNA(Asp/Asn) ligase (611 aa).

Glutamate 174 serves as a coordination point for L-aspartate. Positions 198 to 201 (QLFK) are aspartate. An L-aspartate-binding site is contributed by arginine 220. ATP is bound by residues 220-222 (RDE) and glutamine 229. Histidine 467 contributes to the L-aspartate binding site. Glutamate 501 is a binding site for ATP. Arginine 508 lines the L-aspartate pocket. Position 553–556 (553–556 (GLDR)) interacts with ATP.

The protein belongs to the class-II aminoacyl-tRNA synthetase family. Type 1 subfamily. Homodimer.

The protein resides in the cytoplasm. The enzyme catalyses tRNA(Asx) + L-aspartate + ATP = L-aspartyl-tRNA(Asx) + AMP + diphosphate. In terms of biological role, aspartyl-tRNA synthetase with relaxed tRNA specificity since it is able to aspartylate not only its cognate tRNA(Asp) but also tRNA(Asn). Reaction proceeds in two steps: L-aspartate is first activated by ATP to form Asp-AMP and then transferred to the acceptor end of tRNA(Asp/Asn). The chain is Aspartate--tRNA(Asp/Asn) ligase from Albidiferax ferrireducens (strain ATCC BAA-621 / DSM 15236 / T118) (Rhodoferax ferrireducens).